The primary structure comprises 445 residues: tRNA-2-methylthio-N(6)-dimethylallyladenosine synthase (445 aa).

The MTTase N-terminal domain maps to 7–121 (KHFYIKSFGC…LPELIEKAAS (115 aa)). [4Fe-4S] cluster-binding residues include cysteine 16, cysteine 52, cysteine 84, cysteine 156, cysteine 160, and cysteine 163. Residues 142–374 (RQVGASAFLT…QALLNQQQFD (233 aa)) enclose the Radical SAM core domain. In terms of domain architecture, TRAM spans 377–438 (QQTIGRKATV…PNSVKGQFLD (62 aa)).

It belongs to the methylthiotransferase family. MiaB subfamily. As to quaternary structure, monomer. The cofactor is [4Fe-4S] cluster.

The protein resides in the cytoplasm. It catalyses the reaction N(6)-dimethylallyladenosine(37) in tRNA + (sulfur carrier)-SH + AH2 + 2 S-adenosyl-L-methionine = 2-methylsulfanyl-N(6)-dimethylallyladenosine(37) in tRNA + (sulfur carrier)-H + 5'-deoxyadenosine + L-methionine + A + S-adenosyl-L-homocysteine + 2 H(+). Its function is as follows. Catalyzes the methylthiolation of N6-(dimethylallyl)adenosine (i(6)A), leading to the formation of 2-methylthio-N6-(dimethylallyl)adenosine (ms(2)i(6)A) at position 37 in tRNAs that read codons beginning with uridine. The polypeptide is tRNA-2-methylthio-N(6)-dimethylallyladenosine synthase (Zymomonas mobilis subsp. mobilis (strain ATCC 31821 / ZM4 / CP4)).